Reading from the N-terminus, the 259-residue chain is Glutamate 5-kinase (259 aa).

Residue lysine 18 coordinates ATP. Residues serine 54, aspartate 141, and asparagine 153 each coordinate substrate. 173-174 (SD) contacts ATP.

Belongs to the glutamate 5-kinase family.

The protein resides in the cytoplasm. It catalyses the reaction L-glutamate + ATP = L-glutamyl 5-phosphate + ADP. It functions in the pathway amino-acid biosynthesis; L-proline biosynthesis; L-glutamate 5-semialdehyde from L-glutamate: step 1/2. In terms of biological role, catalyzes the transfer of a phosphate group to glutamate to form L-glutamate 5-phosphate. This Clavibacter michiganensis subsp. michiganensis (strain NCPPB 382) protein is Glutamate 5-kinase.